The following is an 88-amino-acid chain: C-C motif chemokine 18 (88 aa).

The signal sequence occupies residues 1–19 (MKGLAAALLVLCTVALCSC). Disulfide bonds link Cys-29/Cys-53 and Cys-30/Cys-69.

Belongs to the intercrine beta (chemokine CC) family. In terms of processing, the Cys-29/Cys-53 disulfide bond is required for activity.

It localises to the secreted. In terms of biological role, chemotactic factor that attracts lymphocytes but not monocytes or granulocytes. May be involved in B-cell migration into B-cell follicles in lymph nodes. Attracts naive T-lymphocytes toward dendritic cells and activated macrophages in lymph nodes, has chemotactic activity for naive T-cells, CD4+ and CD8+ T-cells and thus may play a role in both humoral and cell-mediated immunity responses. This chain is C-C motif chemokine 18 (CCL18), found in Macaca mulatta (Rhesus macaque).